The following is a 633-amino-acid chain: Glutathione S-transferase C-terminal domain-containing protein (633 aa).

The GST C-terminal domain maps to 130–332 (LGFKKTCLKA…QEVPGVKTAA (203 aa)). The tract at residues 191–233 (NDDKLRRQKLKQQKADGVGPPLTKGKAKSKVHTQETSEGLDSS) is disordered. Residues 224–233 (QETSEGLDSS) are compositionally biased toward polar residues. Position 233 is a phosphoserine (Ser233).

It belongs to the GSTCD family. In terms of tissue distribution, widely expressed in cell types relevant to airway function, including airway smooth muscle cells and epithelial cells.

The protein localises to the cytoplasm. This chain is Glutathione S-transferase C-terminal domain-containing protein (GSTCD), found in Homo sapiens (Human).